Consider the following 247-residue polypeptide: Orotidine 5'-phosphate decarboxylase (247 aa).

Substrate-binding positions include aspartate 16, lysine 38, 66 to 75, threonine 130, arginine 191, glutamine 200, glycine 220, and arginine 221; that span reads DLKFHDIPNT. The Proton donor role is filled by lysine 68.

Belongs to the OMP decarboxylase family. Type 1 subfamily. Homodimer.

The catalysed reaction is orotidine 5'-phosphate + H(+) = UMP + CO2. Its pathway is pyrimidine metabolism; UMP biosynthesis via de novo pathway; UMP from orotate: step 2/2. Catalyzes the decarboxylation of orotidine 5'-monophosphate (OMP) to uridine 5'-monophosphate (UMP). The polypeptide is Orotidine 5'-phosphate decarboxylase (Rhodospirillum rubrum (strain ATCC 11170 / ATH 1.1.1 / DSM 467 / LMG 4362 / NCIMB 8255 / S1)).